The following is a 305-amino-acid chain: Lysosomal thioesterase PPT2 (305 aa).

A signal peptide spans 1–32; the sequence is MLGLPERRLPSAEFLLLLPFLLLLLLLLPAAP. 2 disulfide bridges follow: Cys112–Cys120 and Cys168–Cys179. Ser114 functions as the Nucleophile in the catalytic mechanism. Asn193 is a glycosylation site (N-linked (GlcNAc...) asparagine). Active-site residues include Asp231 and His286. Cysteines 279 and 299 form a disulfide.

The protein belongs to the palmitoyl-protein thioesterase family.

Its subcellular location is the lysosome. It carries out the reaction hexadecanoyl-CoA + H2O = hexadecanoate + CoA + H(+). The enzyme catalyses S-hexadecanoyl-N-acetylcysteamine + H2O = N-acetylcysteamine + hexadecanoate + H(+). Functionally, catalyzes the cleavage of thioester bonds from S-palmitoyl-CoA or S-palmitoyl-N-acetylcysteamine (unbranched structures) but does not have activity against palmitoylcysteine or palmitoylated proteins, branched structures or bulky head groups. Conversely, hydrolyzes both long and short chain fatty acyl-CoA substrate. This is Lysosomal thioesterase PPT2 (PPT2) from Bos taurus (Bovine).